The primary structure comprises 165 residues: Large ribosomal subunit protein uL10 (165 aa).

Belongs to the universal ribosomal protein uL10 family. As to quaternary structure, part of the ribosomal stalk of the 50S ribosomal subunit. The N-terminus interacts with L11 and the large rRNA to form the base of the stalk. The C-terminus forms an elongated spine to which L12 dimers bind in a sequential fashion forming a multimeric L10(L12)X complex.

Functionally, forms part of the ribosomal stalk, playing a central role in the interaction of the ribosome with GTP-bound translation factors. The chain is Large ribosomal subunit protein uL10 from Sodalis glossinidius (strain morsitans).